The primary structure comprises 215 residues: TLD domain-containing protein 2 (215 aa).

Positions 1-46 (MRGLRWRYTRLPSQVEDTLSGEEGNEEEEEEEAAPDPAAAPEDPTV) are disordered. Residues 19–34 (LSGEEGNEEEEEEEAA) show a composition bias toward acidic residues. The TLDc domain occupies 54–215 (QVLSASEIRQ…IQELEAWLLS (162 aa)).

Belongs to the OXR1 family.

This chain is TLD domain-containing protein 2 (TLDC2), found in Homo sapiens (Human).